Reading from the N-terminus, the 381-residue chain is MSQFFEAATPVAIPTNNTNGGSSDAGSAATGGAPVVGTTAQPTINHRLLLSLKEAAKIIGTKGSTISRIRAANAVKIGISEKVPGCSDRILSCAGNVINVANAIGDIVDVLNKRNPENEDAAEGEAEEHYYFHFLNHILPAPSKDEIRDLQQLEDIGYVRLIVANSHISSIIGKAGATIKSLINKHGVKIVASKDFLPASDERIIEIQGFPGSITNVLIEISEIILSDVDVRFSTERSYFPHLKKSSGEPTSPSTSSNTRIELKIPELYVGAIIGRGMNRIKNLKTFTKTNIVVERKDDDDKDENFRKFIITSKFPKNVKLAESMLLKNLNTEIEKRENYKRKLEAAEGDATVVTERSDSASFLEEKEEPQENHDNKEEQS.

Residues 1–34 (MSQFFEAATPVAIPTNNTNGGSSDAGSAATGGAP) form a disordered region. Low complexity predominate over residues 15–33 (TNNTNGGSSDAGSAATGGA). KH domains follow at residues 43-107 (TINH…IGDI), 156-221 (IGYV…LIEI), and 258-326 (NTRI…ESML). A disordered region spans residues 344-381 (LEAAEGDATVVTERSDSASFLEEKEEPQENHDNKEEQS). 3 positions are modified to phosphoserine: S358, S360, and S362. Positions 370–381 (PQENHDNKEEQS) are enriched in basic and acidic residues.

It belongs to the HEK2 family. In terms of assembly, binds RNA. Post-translationally, phosphorylated by the plasma membrane-Anchored casein kinase YCK1. Phosphorylation at its C-terminus reduces its RNA-binding capacity.

It is found in the cytoplasm. The protein resides in the P-body. It localises to the nucleus. The protein localises to the chromosome. Its subcellular location is the telomere. In terms of biological role, RNA-binding protein involved in the correct localization of transcripts in the cell. RNA localization is a widespread mechanism for achieving localized protein synthesis. Required for the asymmetric localization to the daughter cell nucleus of the ASH1 transcript, coding for a specific repressor of transcription. Overexpression inhibits translation of the ASH1 transcript. Involved in the stability of transcripts, like the MTL1 mRNA. Involved in structural and functional organization of telomeric chromatin and regulates silencing at the HMR locus. The protein is Heterogeneous nuclear rnp K-like protein 2 (HEK2) of Saccharomyces cerevisiae (strain YJM789) (Baker's yeast).